A 219-amino-acid chain; its full sequence is Glutathione S-transferase F13 (219 aa).

Residues 2 to 82 form the GST N-terminal domain; that stretch reads AMKLYGDEMS…YIAEKHRDKG (81 aa). Glutathione is bound by residues 11–12, 40–41, 53–54, and 66–67; these read SA, HK, KV, and ES. Residues 90–217 form the GST C-terminal domain; that stretch reads DPKEAAIVKL…VSPGLTVAPT (128 aa).

Belongs to the GST superfamily. Phi family.

Its subcellular location is the cytoplasm. It is found in the cytosol. The enzyme catalyses RX + glutathione = an S-substituted glutathione + a halide anion + H(+). May be involved in the conjugation of reduced glutathione to a wide number of exogenous and endogenous hydrophobic electrophiles and have a detoxification role against certain herbicides. The sequence is that of Glutathione S-transferase F13 (GSTF13) from Arabidopsis thaliana (Mouse-ear cress).